We begin with the raw amino-acid sequence, 116 residues long: Iron-sulfur cluster insertion protein ErpA (116 aa).

Iron-sulfur cluster contacts are provided by Cys-44, Cys-108, and Cys-110.

This sequence belongs to the HesB/IscA family. Homodimer. The cofactor is iron-sulfur cluster.

Functionally, required for insertion of 4Fe-4S clusters for at least IspG. The polypeptide is Iron-sulfur cluster insertion protein ErpA (Shewanella pealeana (strain ATCC 700345 / ANG-SQ1)).